Reading from the N-terminus, the 171-residue chain is Shikimate kinase (171 aa).

14–19 is a binding site for ATP; sequence GAGKST. Serine 18 lines the Mg(2+) pocket. Residues aspartate 36, arginine 60, and glycine 82 each coordinate substrate. Arginine 120 provides a ligand contact to ATP. Position 139 (arginine 139) interacts with substrate. ATP is bound at residue glutamine 156.

It belongs to the shikimate kinase family. As to quaternary structure, monomer. Mg(2+) serves as cofactor.

It localises to the cytoplasm. It carries out the reaction shikimate + ATP = 3-phosphoshikimate + ADP + H(+). It participates in metabolic intermediate biosynthesis; chorismate biosynthesis; chorismate from D-erythrose 4-phosphate and phosphoenolpyruvate: step 5/7. Its function is as follows. Catalyzes the specific phosphorylation of the 3-hydroxyl group of shikimic acid using ATP as a cosubstrate. The chain is Shikimate kinase from Shewanella sp. (strain MR-4).